Here is an 878-residue protein sequence, read N- to C-terminus: E3 ubiquitin-protein ligase SH3RF3 (878 aa).

The disordered stretch occupies residues 19 to 40; the sequence is RGEGEDRQGEQQRGAQARTEED. The RING-type zinc finger occupies 52–93; the sequence is CSVCLERLDTTAKVLPCQHTFCRRCLESIVCSRHELRCPECR. The disordered stretch occupies residues 120-145; sequence PRTGASPGSSPPARPGPGTFSALAGG. SH3 domains lie at 187 to 246 and 249 to 312; these read SQLP…CVRP and QALP…LNDS. Residues 364–433 are interaction with RAC1; that stretch reads RVDSKKNAKK…TVPTQDSSSA (70 aa). Ser-395 bears the Phosphoserine mark. The SH3 3 domain maps to 458 to 519; the sequence is LPLNVYLALY…PGNYVTPVSR (62 aa). 2 disordered regions span residues 574–659 and 688–758; these read QHPA…CPRP and PISG…MGPE. Polar residues-rich tracts occupy residues 590-609, 618-633, 643-653, and 690-699; these read AQPT…THAS, ATVS…SRLP, ASPQHGQQSPA, and SGLSTPSLIN. Over residues 703–716 the composition is skewed to basic and acidic residues; sequence KPDDKKNEKKEKKS. Over residues 741 to 752 the composition is skewed to polar residues; the sequence is HDPQSAMDTSLQ. Residue Ser-792 is modified to Phosphoserine. The region spanning 819–878 is the SH3 4 domain; that stretch reads LPRERYRVVVSYPPQSEAEIELKEGDIVFVHKKHEDGWFKGTLQRNGRTGLFPGSFVESF.

Belongs to the SH3RF family. In terms of assembly, interacts (via SH3 domain 3) with PAK2. Interacts with RAC1 (GTP-bound form). In terms of processing, autoubiquitinated.

It carries out the reaction S-ubiquitinyl-[E2 ubiquitin-conjugating enzyme]-L-cysteine + [acceptor protein]-L-lysine = [E2 ubiquitin-conjugating enzyme]-L-cysteine + N(6)-ubiquitinyl-[acceptor protein]-L-lysine.. It functions in the pathway protein modification; protein ubiquitination. Functionally, has E3 ubiquitin-protein ligase activity. This is E3 ubiquitin-protein ligase SH3RF3 (Sh3rf3) from Mus musculus (Mouse).